A 169-amino-acid chain; its full sequence is Cell division inhibitor SulA (169 aa).

Residues Ala106 to Tyr112 form a ftsZ binding region. Residues Lys162 to His169 are lon protease binding.

Belongs to the SulA family. In terms of assembly, interacts with FtsZ. In terms of processing, is rapidly cleaved and degraded by the Lon protease once DNA damage is repaired.

In terms of biological role, component of the SOS system and an inhibitor of cell division. Accumulation of SulA causes rapid cessation of cell division and the appearance of long, non-septate filaments. In the presence of GTP, binds a polymerization-competent form of FtsZ in a 1:1 ratio, thus inhibiting FtsZ polymerization and therefore preventing it from participating in the assembly of the Z ring. This mechanism prevents the premature segregation of damaged DNA to daughter cells during cell division. The protein is Cell division inhibitor SulA of Shigella boydii serotype 4 (strain Sb227).